A 351-amino-acid polypeptide reads, in one-letter code: Transcription factor bHLH93 (351 aa).

Residues 174-223 enclose the bHLH domain; it reads GQPSKNLMAERRRRKRLNDRLSMLRSIVPKISKMDRTSILGDAIDYMKEL.

Homodimer. Interacts with FAMA. In terms of tissue distribution, broadly expressed.

It is found in the nucleus. Transcription factor. May be involved in the differentiation of stomatal guard cells. This chain is Transcription factor bHLH93 (BHLH93), found in Arabidopsis thaliana (Mouse-ear cress).